The primary structure comprises 507 residues: Maturase K (507 aa).

Belongs to the intron maturase 2 family. MatK subfamily.

The protein localises to the plastid. Its subcellular location is the chloroplast. Its function is as follows. Usually encoded in the trnK tRNA gene intron. Probably assists in splicing its own and other chloroplast group II introns. The chain is Maturase K from Liriodendron tulipifera (Tuliptree).